A 179-amino-acid polypeptide reads, in one-letter code: Large ribosomal subunit protein uL5 (179 aa).

The protein belongs to the universal ribosomal protein uL5 family. In terms of assembly, part of the 50S ribosomal subunit; part of the 5S rRNA/L5/L18/L25 subcomplex. Contacts the 5S rRNA and the P site tRNA. Forms a bridge to the 30S subunit in the 70S ribosome.

Its function is as follows. This is one of the proteins that bind and probably mediate the attachment of the 5S RNA into the large ribosomal subunit, where it forms part of the central protuberance. In the 70S ribosome it contacts protein S13 of the 30S subunit (bridge B1b), connecting the 2 subunits; this bridge is implicated in subunit movement. Contacts the P site tRNA; the 5S rRNA and some of its associated proteins might help stabilize positioning of ribosome-bound tRNAs. This is Large ribosomal subunit protein uL5 from Nitrosospira multiformis (strain ATCC 25196 / NCIMB 11849 / C 71).